A 334-amino-acid polypeptide reads, in one-letter code: Ketol-acid reductoisomerase (NADP(+)) (334 aa).

A KARI N-terminal Rossmann domain is found at Ala3–Thr183. Residues Tyr26–Gln29, Arg49, Ser52, and Asp84–Gln87 each bind NADP(+). His109 is a catalytic residue. An NADP(+)-binding site is contributed by Gly135. Positions Thr184–Ile329 constitute a KARI C-terminal knotted domain. Mg(2+)-binding residues include Asp192, Glu196, Glu228, and Glu232. Ser253 contributes to the substrate binding site.

Belongs to the ketol-acid reductoisomerase family. Mg(2+) is required as a cofactor.

The enzyme catalyses (2R)-2,3-dihydroxy-3-methylbutanoate + NADP(+) = (2S)-2-acetolactate + NADPH + H(+). The catalysed reaction is (2R,3R)-2,3-dihydroxy-3-methylpentanoate + NADP(+) = (S)-2-ethyl-2-hydroxy-3-oxobutanoate + NADPH + H(+). It functions in the pathway amino-acid biosynthesis; L-isoleucine biosynthesis; L-isoleucine from 2-oxobutanoate: step 2/4. It participates in amino-acid biosynthesis; L-valine biosynthesis; L-valine from pyruvate: step 2/4. Its function is as follows. Involved in the biosynthesis of branched-chain amino acids (BCAA). Catalyzes an alkyl-migration followed by a ketol-acid reduction of (S)-2-acetolactate (S2AL) to yield (R)-2,3-dihydroxy-isovalerate. In the isomerase reaction, S2AL is rearranged via a Mg-dependent methyl migration to produce 3-hydroxy-3-methyl-2-ketobutyrate (HMKB). In the reductase reaction, this 2-ketoacid undergoes a metal-dependent reduction by NADPH to yield (R)-2,3-dihydroxy-isovalerate. The polypeptide is Ketol-acid reductoisomerase (NADP(+)) (Rhodopirellula baltica (strain DSM 10527 / NCIMB 13988 / SH1)).